The following is a 194-amino-acid chain: 3-isopropylmalate dehydratase small subunit (194 aa).

The protein belongs to the LeuD family. LeuD type 1 subfamily. As to quaternary structure, heterodimer of LeuC and LeuD.

It catalyses the reaction (2R,3S)-3-isopropylmalate = (2S)-2-isopropylmalate. It participates in amino-acid biosynthesis; L-leucine biosynthesis; L-leucine from 3-methyl-2-oxobutanoate: step 2/4. Its function is as follows. Catalyzes the isomerization between 2-isopropylmalate and 3-isopropylmalate, via the formation of 2-isopropylmaleate. The sequence is that of 3-isopropylmalate dehydratase small subunit from Limosilactobacillus fermentum (strain NBRC 3956 / LMG 18251) (Lactobacillus fermentum).